The following is a 1719-amino-acid chain: Chromodomain-helicase-DNA-binding protein 1 (1719 aa).

Residues 1 to 10 show a composition bias toward basic and acidic residues; it reads MNGHSDEESV. The segment at 1 to 249 is disordered; sequence MNGHSDEESV…EAEETKTDSD (249 aa). The span at 34-62 shows a compositional bias: low complexity; sequence SSGSSSDGSSSQSGSSDSESGSESGSQSE. Positions 66-85 are enriched in basic and acidic residues; it reads DTSREKKQVQAKPPKADGSE. The span at 103-116 shows a compositional bias: low complexity; the sequence is KKQQQQQKAASSDS. Acidic residues predominate over residues 117-133; the sequence is GSEEDSSSSEDSADDSS. Residues 149–160 show a composition bias toward low complexity; the sequence is SGSGSVSGTGSD. Residues 161–178 are compositionally biased toward acidic residues; the sequence is SESEEDGDKSSCEESESD. Residues 184 to 207 show a composition bias toward basic residues; it reads KVKSRKPPSRIKPKSGKKSTGQKK. Acidic residues predominate over residues 212–222; it reads SSEEEEDDDED. A compositionally biased stretch (basic and acidic residues) spans 239–248; the sequence is KEAEETKTDS. Chromo domains lie at 268-360 and 385-448; these read ETIE…RWLK and QIVE…TPFK. The 171-residue stretch at 489 to 659 folds into the Helicase ATP-binding domain; sequence AHSWCKGNSC…WSLLHFIMPE (171 aa). Residue 502 to 509 coordinates ATP; it reads DEMGLGKT. Residues 610-613 carry the DEAH box motif; that stretch reads DEAH. Residues 788–939 enclose the Helicase C-terminal domain; it reads LLDKLLIRLR…HLVIQRMDTT (152 aa). Disordered regions lie at residues 1076 to 1116, 1319 to 1393, and 1503 to 1719; these read ISFN…TIPR, QRLA…TPVH, and KKRQ…SRKT. Basic residues-rich tracts occupy residues 1103–1113 and 1327–1342; these read KRPKKRGRPRT and SKRRKTRNKKNKMKAS. Over residues 1369-1380 the composition is skewed to basic and acidic residues; that stretch reads NKVNEIKSENKE. The segment at 1410–1512 is CHD1 helical C-terminal domain (CHCT); sequence LDQKTFSVCK…KKRQESQQHN (103 aa). Residues 1511–1524 are compositionally biased toward polar residues; the sequence is HNDQNISSNVNTHV. 3 stretches are compositionally biased toward basic and acidic residues: residues 1526–1576, 1585–1673, and 1698–1710; these read RNPD…DSRK, GKDH…DHRA, and SPFEHSSDHKSTP.

The protein belongs to the SNF2/RAD54 helicase family. Component of the SAGA complex. Interacts with SSRP1.

Its subcellular location is the nucleus. The protein localises to the chromosome. It is found in the centromere. The catalysed reaction is ATP + H2O = ADP + phosphate + H(+). Functionally, ATP-dependent chromatin-remodeling factor which functions as substrate recognition component of the transcription regulatory histone acetylation (HAT) complex SAGA. Regulates polymerase II transcription. Also required for efficient transcription by RNA polymerase I, and more specifically the polymerase I transcription termination step. Regulates negatively DNA replication. Not only involved in transcription-related chromatin remodeling, but also required to maintain a specific chromatin configuration across the genome. Required for maintaining open chromatin and pluripotency in embryonic stem cells. Required for centromeric localization of CENPA. This is Chromodomain-helicase-DNA-binding protein 1 (CHD1) from Gallus gallus (Chicken).